Here is a 354-residue protein sequence, read N- to C-terminus: Guanine nucleotide-binding protein G(i) subunit alpha (354 aa).

G2 carries N-myristoyl glycine lipidation. C3 carries the S-palmitoyl cysteine lipid modification. Positions R32–F354 constitute a G-alpha domain. The tract at residues K35–T48 is G1 motif. GTP contacts are provided by residues G40–S47, L175–T181, D200–Q204, N269–D272, and A326. S47 and T181 together coordinate Mg(2+). Residues D173–T181 form a G2 motif region. Positions F196–R205 are G3 motif. The interval I265 to D272 is G4 motif. The tract at residues T324–T329 is G5 motif.

This sequence belongs to the G-alpha family. G(i/o/t/z) subfamily. In terms of assembly, g proteins are composed of 3 units; alpha, beta and gamma. The alpha chain contains the guanine nucleotide binding site.

Functionally, guanine nucleotide-binding proteins (G proteins) are involved as modulators or transducers in various transmembrane signaling systems. This G protein is involved in 1-methyladenine-induced oocyte maturation. In Patiria pectinifera (Starfish), this protein is Guanine nucleotide-binding protein G(i) subunit alpha.